The sequence spans 108 residues: UPF0060 membrane protein Mfla_0485 (108 aa).

4 helical membrane passes run 7–27, 33–53, 63–83, and 87–107; these read FSLF…PYLW, SVWL…LLSL, AAYG…VDGI, and TWDF…MFAP.

It belongs to the UPF0060 family.

The protein localises to the cell inner membrane. This is UPF0060 membrane protein Mfla_0485 from Methylobacillus flagellatus (strain ATCC 51484 / DSM 6875 / VKM B-1610 / KT).